The chain runs to 362 residues: tRNA/tmRNA (uracil-C(5))-methyltransferase (362 aa).

Gln186, Tyr214, Asn219, Glu235, and Asp295 together coordinate S-adenosyl-L-methionine. Cys320 serves as the catalytic Nucleophile. The active-site Proton acceptor is the Glu354.

Belongs to the class I-like SAM-binding methyltransferase superfamily. RNA M5U methyltransferase family. TrmA subfamily.

The enzyme catalyses uridine(54) in tRNA + S-adenosyl-L-methionine = 5-methyluridine(54) in tRNA + S-adenosyl-L-homocysteine + H(+). It catalyses the reaction uridine(341) in tmRNA + S-adenosyl-L-methionine = 5-methyluridine(341) in tmRNA + S-adenosyl-L-homocysteine + H(+). In terms of biological role, dual-specificity methyltransferase that catalyzes the formation of 5-methyluridine at position 54 (m5U54) in all tRNAs, and that of position 341 (m5U341) in tmRNA (transfer-mRNA). This is tRNA/tmRNA (uracil-C(5))-methyltransferase from Ectopseudomonas mendocina (strain ymp) (Pseudomonas mendocina).